The sequence spans 311 residues: Glutaminase (311 aa).

Residues serine 66, asparagine 116, glutamate 162, asparagine 169, tyrosine 193, tyrosine 245, and valine 263 each contribute to the substrate site.

It belongs to the glutaminase family. In terms of assembly, homotetramer.

It catalyses the reaction L-glutamine + H2O = L-glutamate + NH4(+). In Rhodopseudomonas palustris (strain HaA2), this protein is Glutaminase.